A 468-amino-acid polypeptide reads, in one-letter code: UDP-N-acetylmuramate--L-alanine ligase (468 aa).

ATP is bound at residue 107–113 (GTHGKTT).

This sequence belongs to the MurCDEF family.

The protein resides in the cytoplasm. The catalysed reaction is UDP-N-acetyl-alpha-D-muramate + L-alanine + ATP = UDP-N-acetyl-alpha-D-muramoyl-L-alanine + ADP + phosphate + H(+). The protein operates within cell wall biogenesis; peptidoglycan biosynthesis. Functionally, cell wall formation. The chain is UDP-N-acetylmuramate--L-alanine ligase from Roseiflexus sp. (strain RS-1).